We begin with the raw amino-acid sequence, 505 residues long: Lysine--tRNA ligase (505 aa).

Mg(2+) contacts are provided by Glu-415 and Glu-422.

This sequence belongs to the class-II aminoacyl-tRNA synthetase family. Homodimer. It depends on Mg(2+) as a cofactor.

It localises to the cytoplasm. The enzyme catalyses tRNA(Lys) + L-lysine + ATP = L-lysyl-tRNA(Lys) + AMP + diphosphate. The protein is Lysine--tRNA ligase of Vibrio parahaemolyticus serotype O3:K6 (strain RIMD 2210633).